We begin with the raw amino-acid sequence, 111 residues long: BET1-like protein (111 aa).

The Cytoplasmic segment spans residues 1 to 86 (MADWARAQSP…MARSGRDNRK (86 aa)). S9 and S37 each carry phosphoserine. The t-SNARE coiled-coil homology domain maps to 15 to 77 (EILDRENKRM…TGSVKRFSTM (63 aa)). The chain crosses the membrane as a helical; Anchor for type IV membrane protein span at residues 87–107 (LLCGMAVGLIVAFFILSYFLS). Over 108–111 (RART) the chain is Lumenal.

In terms of assembly, component of a SNARE complex consisting of STX5, YKT6, GOSR1 and BET1L. Interacts with STX5.

Its subcellular location is the golgi apparatus membrane. The protein localises to the golgi apparatus. The protein resides in the trans-Golgi network membrane. In terms of biological role, vesicle SNARE required for targeting and fusion of retrograde transport vesicles with the Golgi complex. Required for the integrity of the Golgi complex. The sequence is that of BET1-like protein from Pongo abelii (Sumatran orangutan).